The following is a 113-amino-acid chain: Large ribosomal subunit protein bL19 (113 aa).

Belongs to the bacterial ribosomal protein bL19 family.

This protein is located at the 30S-50S ribosomal subunit interface and may play a role in the structure and function of the aminoacyl-tRNA binding site. This chain is Large ribosomal subunit protein bL19, found in Mycolicibacterium vanbaalenii (strain DSM 7251 / JCM 13017 / BCRC 16820 / KCTC 9966 / NRRL B-24157 / PYR-1) (Mycobacterium vanbaalenii).